We begin with the raw amino-acid sequence, 113 residues long: Small ribosomal subunit protein bS6 (113 aa).

Belongs to the bacterial ribosomal protein bS6 family.

Binds together with bS18 to 16S ribosomal RNA. In Buchnera aphidicola subsp. Schizaphis graminum (strain Sg), this protein is Small ribosomal subunit protein bS6.